Reading from the N-terminus, the 317-residue chain is 4-hydroxy-3-methylbut-2-enyl diphosphate reductase (317 aa).

Cysteine 12 contacts [4Fe-4S] cluster. Histidine 41 and histidine 74 together coordinate (2E)-4-hydroxy-3-methylbut-2-enyl diphosphate. Positions 41 and 74 each coordinate dimethylallyl diphosphate. Histidine 41 and histidine 74 together coordinate isopentenyl diphosphate. Cysteine 97 contributes to the [4Fe-4S] cluster binding site. Histidine 125 serves as a coordination point for (2E)-4-hydroxy-3-methylbut-2-enyl diphosphate. A dimethylallyl diphosphate-binding site is contributed by histidine 125. Histidine 125 serves as a coordination point for isopentenyl diphosphate. Catalysis depends on glutamate 127, which acts as the Proton donor. Threonine 168 serves as a coordination point for (2E)-4-hydroxy-3-methylbut-2-enyl diphosphate. Cysteine 198 lines the [4Fe-4S] cluster pocket. (2E)-4-hydroxy-3-methylbut-2-enyl diphosphate-binding residues include serine 226, serine 227, asparagine 228, and serine 270. Positions 226, 227, 228, and 270 each coordinate dimethylallyl diphosphate. Positions 226, 227, 228, and 270 each coordinate isopentenyl diphosphate.

This sequence belongs to the IspH family. In terms of assembly, homodimer. Requires [4Fe-4S] cluster as cofactor.

It carries out the reaction isopentenyl diphosphate + 2 oxidized [2Fe-2S]-[ferredoxin] + H2O = (2E)-4-hydroxy-3-methylbut-2-enyl diphosphate + 2 reduced [2Fe-2S]-[ferredoxin] + 2 H(+). It catalyses the reaction dimethylallyl diphosphate + 2 oxidized [2Fe-2S]-[ferredoxin] + H2O = (2E)-4-hydroxy-3-methylbut-2-enyl diphosphate + 2 reduced [2Fe-2S]-[ferredoxin] + 2 H(+). Its pathway is isoprenoid biosynthesis; dimethylallyl diphosphate biosynthesis; dimethylallyl diphosphate from (2E)-4-hydroxy-3-methylbutenyl diphosphate: step 1/1. It participates in isoprenoid biosynthesis; isopentenyl diphosphate biosynthesis via DXP pathway; isopentenyl diphosphate from 1-deoxy-D-xylulose 5-phosphate: step 6/6. In terms of biological role, catalyzes the conversion of 1-hydroxy-2-methyl-2-(E)-butenyl 4-diphosphate (HMBPP) into a mixture of isopentenyl diphosphate (IPP) and dimethylallyl diphosphate (DMAPP). Acts in the terminal step of the DOXP/MEP pathway for isoprenoid precursor biosynthesis. The sequence is that of 4-hydroxy-3-methylbut-2-enyl diphosphate reductase from Edwardsiella ictaluri (strain 93-146).